The primary structure comprises 340 residues: Phosphoribosylformylglycinamidine cyclo-ligase (340 aa).

It belongs to the AIR synthase family.

It is found in the cytoplasm. The enzyme catalyses 2-formamido-N(1)-(5-O-phospho-beta-D-ribosyl)acetamidine + ATP = 5-amino-1-(5-phospho-beta-D-ribosyl)imidazole + ADP + phosphate + H(+). The protein operates within purine metabolism; IMP biosynthesis via de novo pathway; 5-amino-1-(5-phospho-D-ribosyl)imidazole from N(2)-formyl-N(1)-(5-phospho-D-ribosyl)glycinamide: step 2/2. The chain is Phosphoribosylformylglycinamidine cyclo-ligase from Streptococcus pyogenes serotype M18 (strain MGAS8232).